The primary structure comprises 136 residues: Ribosome-binding factor A (136 aa).

Residues 1 to 22 (MNTAGPAGKLAGHAASGPTQRQ) are disordered.

This sequence belongs to the RbfA family. In terms of assembly, monomer. Binds 30S ribosomal subunits, but not 50S ribosomal subunits or 70S ribosomes.

It is found in the cytoplasm. Functionally, one of several proteins that assist in the late maturation steps of the functional core of the 30S ribosomal subunit. Associates with free 30S ribosomal subunits (but not with 30S subunits that are part of 70S ribosomes or polysomes). Required for efficient processing of 16S rRNA. May interact with the 5'-terminal helix region of 16S rRNA. The sequence is that of Ribosome-binding factor A from Gluconacetobacter diazotrophicus (strain ATCC 49037 / DSM 5601 / CCUG 37298 / CIP 103539 / LMG 7603 / PAl5).